The chain runs to 213 residues: Inactive ribonuclease-like protein 10 (213 aa).

The first 24 residues, 1–24 (MKLTLVQIFFMMLLLLLGLGMGLG), serve as a signal peptide directing secretion. The N-linked (GlcNAc...) asparagine glycan is linked to Asn-131.

This sequence belongs to the pancreatic ribonuclease family. Post-translationally, the N-terminus is blocked. Glycosylated. As to expression, male-specific expression in proximal caput of the epididymis.

The protein localises to the secreted. Its function is as follows. Secreted proximal epididymal protein required for post-testicular sperm maturation and male fertility. May be involved in sperm adhesion to the egg zona pellucida. Does not have ribonuclease activity. The polypeptide is Inactive ribonuclease-like protein 10 (RNASE10) (Equus caballus (Horse)).